A 389-amino-acid polypeptide reads, in one-letter code: Ecto-ADP-ribosyltransferase 3 (389 aa).

Positions 1–26 (MKTGHFEIVTMLLATMILVDIFQVKA) are cleaved as a signal peptide. Cys43 and Cys256 are oxidised to a cystine. Positions 64 to 251 (QQLDTVWENA…LILQSINKTC (188 aa)) constitute a TR mART core domain. NAD(+) contacts are provided by Tyr101 and Arg163. Asn248 carries N-linked (GlcNAc...) asparagine glycosylation. 3 consecutive repeat copies span residues 283–292 (GEKNQKLEDH), 293–302 (SEKNWKLEDH), and 303–312 (GEKNQKLEDH). The 3 X 10 AA tandem repeats of [GS]-E-K-N-[QW]-K-L-E-D-H stretch occupies residues 283–312 (GEKNQKLEDHSEKNWKLEDHGEKNQKLEDH). The tract at residues 325-362 (MKIPEPFPLPEDKSQGNINNPTPGPVPVPGPKSHPSAS) is disordered. The O-linked (GalNAc...) threonine glycan is linked to Thr346. Residues 346 to 356 (TPGPVPVPGPK) show a composition bias toward pro residues. Residue Ser362 is the site of GPI-anchor amidated serine attachment. A propeptide spans 363–389 (SGKLLLPQFGMVIILISVSAINLFVAL) (removed in mature form).

It belongs to the Arg-specific ADP-ribosyltransferase family. In terms of processing, O-glycosylated with core 1 or possibly core 8 glycans. As to expression, testis specific.

It localises to the cell membrane. The enzyme catalyses L-arginyl-[protein] + NAD(+) = N(omega)-(ADP-D-ribosyl)-L-arginyl-[protein] + nicotinamide + H(+). In Homo sapiens (Human), this protein is Ecto-ADP-ribosyltransferase 3 (ART3).